We begin with the raw amino-acid sequence, 131 residues long: Leptin receptor overlapping transcript-like 1 (131 aa).

Transmembrane regions (helical) follow at residues 7–27 (LISL…GCAL), 32–52 (QYWP…YCIA), 69–89 (LAIF…VVFA), and 100–120 (ALVL…FLVF).

This sequence belongs to the OB-RGRP/VPS55 family. In terms of assembly, interacts with RAB13.

The protein localises to the membrane. Its function is as follows. Negatively regulates growth hormone (GH) receptor cell surface expression in liver. May play a role in liver resistance to GH during periods of reduced nutrient availability. The polypeptide is Leptin receptor overlapping transcript-like 1 (Leprotl1) (Mus musculus (Mouse)).